We begin with the raw amino-acid sequence, 374 residues long: Fe(2+) transport protein 1 (374 aa).

The first 33 residues, 1–33, serve as a signal peptide directing secretion; it reads MATPRTLVPILPPVAALLLLLVAASSIPILAAA. At 34 to 62 the chain is on the extracellular side; the sequence is QPADACGGAPDQAAADGACHDVPRALRLK. A helical membrane pass occupies residues 63 to 83; sequence LIAIPTILVSSVVGVCLPLLS. The Cytoplasmic segment spans residues 84–92; that stretch reads RSVPALRPD. Residues 93–113 form a helical membrane-spanning segment; sequence GGLFAVVKAFASGVILATGYM. The Extracellular portion of the chain corresponds to 114–137; sequence HVLPDAFNNLTSPCLPRKPWSEFP. The helical transmembrane segment at 138–158 threads the bilayer; sequence FAAFVAMLAAVSTLMADSLML. Residues 159–219 lie on the Cytoplasmic side of the membrane; it reads TYYNRSKPRP…ATQVQLRRNR (61 aa). The tract at residues 166 to 199 is disordered; that stretch reads PRPSSGGDVAAVADHGESPDQGHRHGHGHGHGHG. The span at 179–188 shows a compositional bias: basic and acidic residues; that stretch reads DHGESPDQGH. Residues 220-240 traverse the membrane as a helical segment; sequence VVVQVLEIGIVVHSVVIGLGM. Residues 241-251 are Extracellular-facing; that stretch reads GASQNVCTIRP. A helical transmembrane segment spans residues 252 to 272; the sequence is LVAAMCFHQMFEGMGLGGCIL. Topologically, residues 273 to 282 are cytoplasmic; the sequence is QAEYGRRMRS. A helical membrane pass occupies residues 283–303; the sequence is VLVFFFSTTTPFGIALGLALT. The Extracellular portion of the chain corresponds to 304-313; that stretch reads RVYRDNSPTA. A helical membrane pass occupies residues 314 to 334; sequence LIVVGLLNAASAGLLHYMALV. Residues 335-353 are Cytoplasmic-facing; that stretch reads ELLAADFMGPKLQGNVRLQ. The helical transmembrane segment at 354–374 threads the bilayer; the sequence is LAAFLAVLLGAGGMSVMAKWA.

It belongs to the ZIP transporter (TC 2.A.5) family. Expressed in companion cells in the upper region of the root.

It is found in the cell membrane. Iron transporter involved in the uptake of iron from the rhizosphere across the plasma membrane in the root epidermal layer. May also transport other divalent cations. This is Fe(2+) transport protein 1 (IRT1) from Oryza sativa subsp. japonica (Rice).